The primary structure comprises 167 residues: Sporulation membrane protein YtrI (167 aa).

Residues 15-35 traverse the membrane as a helical segment; it reads FFAGMMCGAVISWFFFLFTYG.

It localises to the cell membrane. Involved in sporulation. The chain is Sporulation membrane protein YtrI (ytrI) from Bacillus subtilis (strain 168).